The following is a 286-amino-acid chain: ATP synthase gamma chain (286 aa).

This sequence belongs to the ATPase gamma chain family. F-type ATPases have 2 components, CF(1) - the catalytic core - and CF(0) - the membrane proton channel. CF(1) has five subunits: alpha(3), beta(3), gamma(1), delta(1), epsilon(1). CF(0) has three main subunits: a, b and c.

It localises to the cell inner membrane. Produces ATP from ADP in the presence of a proton gradient across the membrane. The gamma chain is believed to be important in regulating ATPase activity and the flow of protons through the CF(0) complex. This is ATP synthase gamma chain from Pseudomonas fluorescens (strain ATCC BAA-477 / NRRL B-23932 / Pf-5).